The primary structure comprises 542 residues: CTP synthase (542 aa).

Positions 1-265 (MTRYIFVTGG…DDFVVERFGL (265 aa)) are amidoligase domain. CTP is bound at residue Ser13. UTP is bound at residue Ser13. Residues 14–19 (SLGKGI) and Asp71 each bind ATP. Residues Asp71 and Glu139 each coordinate Mg(2+). CTP-binding positions include 146–148 (DIE), 186–191 (KTKPTQ), and Lys222. Residues 186–191 (KTKPTQ) and Lys222 each bind UTP. Positions 290–541 (TIAMVGKYME…VKAALAQKNK (252 aa)) constitute a Glutamine amidotransferase type-1 domain. Gly351 is an L-glutamine binding site. Cys378 (nucleophile; for glutamine hydrolysis) is an active-site residue. Residues 379–382 (LGMQ), Glu402, and Arg469 each bind L-glutamine. Catalysis depends on residues His514 and Glu516.

This sequence belongs to the CTP synthase family. As to quaternary structure, homotetramer.

The catalysed reaction is UTP + L-glutamine + ATP + H2O = CTP + L-glutamate + ADP + phosphate + 2 H(+). It catalyses the reaction L-glutamine + H2O = L-glutamate + NH4(+). It carries out the reaction UTP + NH4(+) + ATP = CTP + ADP + phosphate + 2 H(+). It participates in pyrimidine metabolism; CTP biosynthesis via de novo pathway; CTP from UDP: step 2/2. Allosterically activated by GTP, when glutamine is the substrate; GTP has no effect on the reaction when ammonia is the substrate. The allosteric effector GTP functions by stabilizing the protein conformation that binds the tetrahedral intermediate(s) formed during glutamine hydrolysis. Inhibited by the product CTP, via allosteric rather than competitive inhibition. Its function is as follows. Catalyzes the ATP-dependent amination of UTP to CTP with either L-glutamine or ammonia as the source of nitrogen. Regulates intracellular CTP levels through interactions with the four ribonucleotide triphosphates. This Pseudomonas entomophila (strain L48) protein is CTP synthase.